The primary structure comprises 100 residues: Large ribosomal subunit protein bL28 (100 aa).

It belongs to the bacterial ribosomal protein bL28 family.

This chain is Large ribosomal subunit protein bL28, found in Methylobacterium radiotolerans (strain ATCC 27329 / DSM 1819 / JCM 2831 / NBRC 15690 / NCIMB 10815 / 0-1).